Reading from the N-terminus, the 822-residue chain is Phenylalanine--tRNA ligase beta subunit (822 aa).

The tRNA-binding domain maps to 39–150 (ADRLVGFRTA…ETAPIGESYA (112 aa)). A B5 domain is found at 399–502 (DWKRTARLRF…RLYGLDNVPA (104 aa)). Mg(2+)-binding residues include Asp486, Glu489, and Glu490. The FDX-ACB domain maps to 728-821 (SPLQPVRRDF…VLKATGAVLR (94 aa)).

This sequence belongs to the phenylalanyl-tRNA synthetase beta subunit family. Type 1 subfamily. Tetramer of two alpha and two beta subunits. The cofactor is Mg(2+).

It localises to the cytoplasm. It carries out the reaction tRNA(Phe) + L-phenylalanine + ATP = L-phenylalanyl-tRNA(Phe) + AMP + diphosphate + H(+). The sequence is that of Phenylalanine--tRNA ligase beta subunit from Gluconobacter oxydans (strain 621H) (Gluconobacter suboxydans).